Consider the following 518-residue polypeptide: Major facilitator superfamily multidrug transporter mfsC (518 aa).

A run of 7 helical transmembrane segments spans residues 27–47 (VLLT…SVLF), 65–85 (WVLI…GQLG), 88–108 (FGLE…NVIN), 123–143 (ISGV…SNTF), 152–172 (ALAI…VVGS), 183–203 (IFWL…LFLP), and 212–232 (PIDI…VYGL). Asn233 carries an N-linked (GlcNAc...) asparagine glycan. The next 7 membrane-spanning stretches (helical) occupy residues 242–262 (SAAM…FLWV), 281–301 (FLVM…WFFI), 315–335 (ILTA…GVFA), 347–367 (ILVA…FAGP), 380–400 (TAII…SILL), 409–429 (AVAG…ILAG), and 455–475 (AFWL…VCYW).

The protein belongs to the major facilitator superfamily. EmrB family.

Its subcellular location is the membrane. Functionally, major facilitator superfamily transporter that may be involved in A.fumigatus adaptation to azoles such as vorizonazole. The chain is Major facilitator superfamily multidrug transporter mfsC from Aspergillus fumigatus (strain ATCC MYA-4609 / CBS 101355 / FGSC A1100 / Af293) (Neosartorya fumigata).